The following is a 344-amino-acid chain: Phosphate acyltransferase (344 aa).

Belongs to the PlsX family. As to quaternary structure, homodimer. Probably interacts with PlsY.

The protein resides in the cytoplasm. The catalysed reaction is a fatty acyl-[ACP] + phosphate = an acyl phosphate + holo-[ACP]. The protein operates within lipid metabolism; phospholipid metabolism. Catalyzes the reversible formation of acyl-phosphate (acyl-PO(4)) from acyl-[acyl-carrier-protein] (acyl-ACP). This enzyme utilizes acyl-ACP as fatty acyl donor, but not acyl-CoA. The chain is Phosphate acyltransferase from Sodalis glossinidius (strain morsitans).